The chain runs to 71 residues: Exodeoxyribonuclease 7 small subunit (71 aa).

It belongs to the XseB family. Heterooligomer composed of large and small subunits.

Its subcellular location is the cytoplasm. The enzyme catalyses Exonucleolytic cleavage in either 5'- to 3'- or 3'- to 5'-direction to yield nucleoside 5'-phosphates.. Functionally, bidirectionally degrades single-stranded DNA into large acid-insoluble oligonucleotides, which are then degraded further into small acid-soluble oligonucleotides. The protein is Exodeoxyribonuclease 7 small subunit of Streptococcus agalactiae serotype Ia (strain ATCC 27591 / A909 / CDC SS700).